The following is a 254-amino-acid chain: Tabinhibitin 6 (254 aa).

A signal peptide spans 1-22; sequence MLPYWCPLLLAALVLQYATIDA. Positions 31-33 match the Cell attachment site motif; the sequence is RGD. The SCP domain occupies 66-210; the sequence is LSKINDVRDH…KARALLTCNF (145 aa).

It belongs to the CRISP family. As to expression, expressed in salivary glands.

Its subcellular location is the secreted. Inhibits platelet aggregation induced by all agonists tested (ADP, arachidonic acid, the thromboxane A2 analog U46619, thrombin, and snake venom snaclecs (TMVA that activates platelet through GPIB, and stejnulxin that specifically acts through GPVI (GP6))). May act by competing with fibrinogen for binding to glycoprotein IIb/IIIa (ITGA2B/ITGB3). This is Tabinhibitin 6 from Tabanus yao (Horsefly).